The primary structure comprises 481 residues: Aromatic amino acid aminotransferase C1773.13 (481 aa).

Belongs to the class-I pyridoxal-phosphate-dependent aminotransferase family. Requires pyridoxal 5'-phosphate as cofactor.

It localises to the cytoplasm. The enzyme catalyses an aromatic L-alpha-amino acid + 2-oxoglutarate = an aromatic oxo-acid + L-glutamate. In terms of biological role, has aromatic amino acid transaminase activity. This Schizosaccharomyces pombe (strain 972 / ATCC 24843) (Fission yeast) protein is Aromatic amino acid aminotransferase C1773.13.